Consider the following 257-residue polypeptide: Acetylglutamate kinase (257 aa).

Residues 43 to 44, R65, and N157 contribute to the substrate site; that span reads GG. Residues 180–185 and 208–210 contribute to the ATP site; these read DISGIL and IIT.

The protein belongs to the acetylglutamate kinase family. ArgB subfamily. Homodimer.

The protein resides in the cytoplasm. It catalyses the reaction N-acetyl-L-glutamate + ATP = N-acetyl-L-glutamyl 5-phosphate + ADP. It functions in the pathway amino-acid biosynthesis; L-arginine biosynthesis; N(2)-acetyl-L-ornithine from L-glutamate: step 2/4. Catalyzes the ATP-dependent phosphorylation of N-acetyl-L-glutamate. The polypeptide is Acetylglutamate kinase (Sodalis glossinidius (strain morsitans)).